We begin with the raw amino-acid sequence, 464 residues long: Argininosuccinate lyase (464 aa).

It belongs to the lyase 1 family. Argininosuccinate lyase subfamily.

It is found in the cytoplasm. The catalysed reaction is 2-(N(omega)-L-arginino)succinate = fumarate + L-arginine. The protein operates within amino-acid biosynthesis; L-arginine biosynthesis; L-arginine from L-ornithine and carbamoyl phosphate: step 3/3. The chain is Argininosuccinate lyase from Alcanivorax borkumensis (strain ATCC 700651 / DSM 11573 / NCIMB 13689 / SK2).